The sequence spans 511 residues: Apolipoprotein N-acyltransferase (511 aa).

Transmembrane regions (helical) follow at residues Leu-24–Leu-44, Gly-58–His-78, Phe-90–Trp-110, Leu-125–Phe-145, Val-163–Val-183, and Gly-192–Leu-212. The region spanning Ile-230 to Pro-470 is the CN hydrolase domain. Glu-269 functions as the Proton acceptor in the catalytic mechanism. Lys-330 is a catalytic residue. Cys-382 (nucleophile) is an active-site residue. The helical transmembrane segment at Val-482–Leu-502 threads the bilayer.

The protein belongs to the CN hydrolase family. Apolipoprotein N-acyltransferase subfamily.

It localises to the cell inner membrane. It catalyses the reaction N-terminal S-1,2-diacyl-sn-glyceryl-L-cysteinyl-[lipoprotein] + a glycerophospholipid = N-acyl-S-1,2-diacyl-sn-glyceryl-L-cysteinyl-[lipoprotein] + a 2-acyl-sn-glycero-3-phospholipid + H(+). Its pathway is protein modification; lipoprotein biosynthesis (N-acyl transfer). Its function is as follows. Catalyzes the phospholipid dependent N-acylation of the N-terminal cysteine of apolipoprotein, the last step in lipoprotein maturation. This is Apolipoprotein N-acyltransferase from Pseudomonas aeruginosa (strain UCBPP-PA14).